Consider the following 1055-residue polypeptide: TNF receptor-associated factor homolog 1a (1055 aa).

Residues 1 to 56 form a disordered region; it reads MSESTNEDSGAGRSSLEENSNGQRSQSEEAIAEWRSSEQVENGTPSTSPPYWDIDD. Positions 37–46 are enriched in polar residues; it reads SEQVENGTPS. An MATH domain is found at 68 to 191; it reads FGKNTWTIEK…SGCLTIKAQV (124 aa). Disordered stretches follow at residues 352–380, 431–590, 603–772, and 820–845; these read PKKE…VERD, AESE…NGSY, FSNG…APII, and VGSS…SHPS. Basic and acidic residues predominate over residues 433–446; it reads SEQKGKRGASEKEK. The stretch at 441-496 forms a coiled coil; that stretch reads ASEKEKKSKKKQAKQKKNKNKGKEMRKEDKVRTQTEEREIEKEECVRAIAESSAEK. Residues 447–460 show a composition bias toward basic residues; that stretch reads KSKKKQAKQKKNKN. The span at 461 to 486 shows a compositional bias: basic and acidic residues; the sequence is KGKEMRKEDKVRTQTEEREIEKEECV. Low complexity predominate over residues 502–513; it reads DVSDVSDSVDSS. Basic and acidic residues predominate over residues 524 to 537; sequence RESSPVHWEMDASE. The segment covering 569 to 586 has biased composition (polar residues); sequence MDDSSSTCSNDSIQSGVA. A compositionally biased stretch (basic and acidic residues) spans 657–668; that stretch reads QKPESPKERSPV. Polar residues-rich tracts occupy residues 723 to 740 and 823 to 845; these read KSPS…QLQT and SGFT…SHPS.

As to quaternary structure, interacts with AHK3. Interacts with ATG6, SINAT1, SINAT2, SINAT5 and SINAT6.

The protein resides in the cytoplasm. Functions redundantly with TRAF1B in the regulation of plant immune response. Contributes to the turnover of the nucleotide-binding domain and leucine-rich repeat-containing (NB-LRR) immune receptors SNC1 and RPS2. May associate with an E3 ubiquitin-protein ligase complex, which modulates ubiquitination and subsequent degradation of NB-LRR immune sensors to maintain their homeostasis. Functions redundantly with TRAF1B in the regulation of autophagosome formation. Required for SINAT1- and SINAT2-mediated ubiquitination and destabilization of ATG6. Functions as a molecular adapter that helps to regulate autophagy by modulating ATG6 stability. In Arabidopsis thaliana (Mouse-ear cress), this protein is TNF receptor-associated factor homolog 1a.